A 162-amino-acid polypeptide reads, in one-letter code: Caveolin-2 (162 aa).

The Cytoplasmic portion of the chain corresponds to 1–86 (MGLESEKADV…FEISKYVLYK (86 aa)). At Y19 the chain carries Phosphotyrosine. S20, S23, and S36 each carry phosphoserine. Residues 87–107 (FLTFFLAIPLAFAAGILFAIL) constitute an intramembrane region (helical). The Cytoplasmic segment spans residues 108 to 162 (SCLHIWIIMPFVKTCLMVLPSVQTIWKSVTDVVIAPLCTSVGRSFSSVSLQLSQD).

It belongs to the caveolin family. Monomer or homodimer. Interacts with CAV1; the interaction forms a stable heterooligomeric complex that is required for targeting to lipid rafts and for caveolae formation. Tyrosine phosphorylated forms do not form heterooligomers with the Tyr-19-phosphorylated form existing as a monomer or dimer. Interacts (tyrosine phosphorylated form) with the SH2 domain-containing proteins, RASA1, NCK1 and SRC. Interacts (tyrosine phosphorylated form) with INSR. Interacts (Tyr-19 phosphorylated form) with MAPK1 (phosphorylated form); the interaction, promoted by insulin, leads to nuclear location and MAPK1 activation. Interacts with STAT3; the interaction is increased on insulin-induced tyrosine phosphorylation leading to STAT activation. Post-translationally, phosphorylated on serine and tyrosine residues. CAV1 promotes phosphorylation on Ser-23 which then targets the complex to the plasma membrane, lipid rafts and caveolae. Phosphorylation on Ser-36 appears to modulate mitosis in endothelial cells. Phosphorylation on Tyr-19 is required for insulin-induced phosphorylation of MAPK1 and DNA binding of STAT3. Tyrosine phosphorylation is induced by both EGF and insulin.

Its subcellular location is the nucleus. The protein localises to the golgi apparatus membrane. It localises to the cell membrane. It is found in the membrane. The protein resides in the caveola. Its function is as follows. May act as a scaffolding protein within caveolar membranes. Interacts directly with G-protein alpha subunits and can functionally regulate their activity. Acts as an accessory protein in conjunction with CAV1 in targeting to lipid rafts and driving caveolae formation. The Ser-36 phosphorylated form has a role in modulating mitosis in endothelial cells. Positive regulator of cellular mitogenesis of the MAPK signaling pathway. Required for the insulin-stimulated nuclear translocation and activation of MAPK1 and STAT3, and the subsequent regulation of cell cycle progression. The sequence is that of Caveolin-2 (CAV2) from Echinops telfairi (Lesser hedgehog tenrec).